The primary structure comprises 322 residues: DNA repair and recombination protein RadA (322 aa).

105–112 (GMFGSGKT) lines the ATP pocket.

Belongs to the eukaryotic RecA-like protein family.

Its function is as follows. Involved in DNA repair and in homologous recombination. Binds and assemble on single-stranded DNA to form a nucleoprotein filament. Hydrolyzes ATP in a ssDNA-dependent manner and promotes DNA strand exchange between homologous DNA molecules. This is DNA repair and recombination protein RadA from Methanococcus maripaludis (Methanococcus deltae).